The primary structure comprises 175 residues: Alkyl hydroperoxide reductase AhpD (175 aa).

The active-site Proton donor is the C130. C130 and C133 are oxidised to a cystine. Residue C133 is the Cysteine sulfenic acid (-SOH) intermediate of the active site.

It belongs to the AhpD family. As to quaternary structure, homotrimer.

It catalyses the reaction N(6)-[(R)-dihydrolipoyl]-L-lysyl-[lipoyl-carrier protein] + a hydroperoxide = N(6)-[(R)-lipoyl]-L-lysyl-[lipoyl-carrier protein] + an alcohol + H2O. In terms of biological role, antioxidant protein with alkyl hydroperoxidase activity. Required for the reduction of the AhpC active site cysteine residues and for the regeneration of the AhpC enzyme activity. The chain is Alkyl hydroperoxide reductase AhpD from Mycobacteroides abscessus (strain ATCC 19977 / DSM 44196 / CCUG 20993 / CIP 104536 / JCM 13569 / NCTC 13031 / TMC 1543 / L948) (Mycobacterium abscessus).